We begin with the raw amino-acid sequence, 302 residues long: 33 kDa chaperonin (302 aa).

Disulfide bonds link Cys-234/Cys-236 and Cys-267/Cys-270.

The protein belongs to the HSP33 family. Under oxidizing conditions two disulfide bonds are formed involving the reactive cysteines. Under reducing conditions zinc is bound to the reactive cysteines and the protein is inactive.

It localises to the cytoplasm. In terms of biological role, redox regulated molecular chaperone. Protects both thermally unfolding and oxidatively damaged proteins from irreversible aggregation. Plays an important role in the bacterial defense system toward oxidative stress. The polypeptide is 33 kDa chaperonin (Neisseria meningitidis serogroup A / serotype 4A (strain DSM 15465 / Z2491)).